The primary structure comprises 217 residues: MOB kinase activator 3A (217 aa).

The Zn(2+) site is built by C83, C88, H165, and H170.

This sequence belongs to the MOB1/phocein family.

May regulate the activity of kinases. The polypeptide is MOB kinase activator 3A (MOB3A) (Homo sapiens (Human)).